The sequence spans 790 residues: MPAAIVHSADPSSTSILVEVEGMKCAGCVAAVERRLQQTAGVEAVSVNLITRLAKVDYDAALIEDPTVLTTEITGLGFRAQLRQDDNPLTLPIAEIPPLQQQRLQLAIAAFLLIVSSWGHLGHWLDHPLPGTDQLWFHALLAIWALLGPGRSILQAGWQGLRCGAPNMNSLVLLGTGSAYLASLVALLWPQLGWVCFLDEPVMLLGFILLGRTLEEQARFRSQAALQNLLALQPETTQLLTAPSSIAPQDLLEAPAQIWPVAQLRAGDYVQVLPGVRIPVDGCIVAGQSTLDTAMLTGEPLPQPCQVGDRVCAGTLNLSHRLVIRAEQTGSQTRLAAIVRCVAEAQQRKAPVQRFADAIAGRFVYGVCAIAALTFGFWATLGSRWWPQVLQQPLPGLLIHAPHHGMEMAHPHSHSPLLLALTLAISVLVVACPCALGLATPTAILVATGLAAEQGILVRGGDVLEQLARIKHFVFDKTGTLTQGQFELIEIQPLADVDPDRLLQWAAALEADSRHPLATALQTAAQAANLAPIAASDRQQVPGLGVSGTCDGRSLRLGNPTWVQVATAKLPTGSAAATSIWLADDQQLLACFWLQDQPRPEAAEVVQALRSRGATVQILSGDRQTTAVALAQQLGLESETVVAEVLPEDKAAAIAALQSQGDAVAMIGDGINDAPALATAAVGISLAAGSDIAQDSAGLLLSRDRLDSVLVAWNLSQMGLRTIRQNLTWALGYNVVMLPLAAGAFLPAYGLALTPAIAGACMAVSSLAVVSNSLLLRYWFRRSLNHSVSV.

Over 1–105 the chain is Cytoplasmic; that stretch reads MPAAIVHSAD…IPPLQQQRLQ (105 aa). The 68-residue stretch at 14-81 folds into the HMA domain; it reads TSILVEVEGM…EITGLGFRAQ (68 aa). Cu cation contacts are provided by C25 and C28. A helical transmembrane segment spans residues 106–125; sequence LAIAAFLLIVSSWGHLGHWL. Topologically, residues 126-134 are extracellular; that stretch reads DHPLPGTDQ. A helical transmembrane segment spans residues 135–154; that stretch reads LWFHALLAIWALLGPGRSIL. Residues 155–166 are Cytoplasmic-facing; that stretch reads QAGWQGLRCGAP. The chain crosses the membrane as a helical span at residues 167 to 189; the sequence is NMNSLVLLGTGSAYLASLVALLW. The Extracellular segment spans residues 190-193; that stretch reads PQLG. A helical membrane pass occupies residues 194-211; the sequence is WVCFLDEPVMLLGFILLG. The Cytoplasmic segment spans residues 212 to 357; the sequence is RTLEEQARFR…RKAPVQRFAD (146 aa). Residues 358–380 form a helical membrane-spanning segment; sequence AIAGRFVYGVCAIAALTFGFWAT. At 381-416 the chain is on the extracellular side; that stretch reads LGSRWWPQVLQQPLPGLLIHAPHHGMEMAHPHSHSP. A helical membrane pass occupies residues 417–439; that stretch reads LLLALTLAISVLVVACPCALGLA. The Cytoplasmic portion of the chain corresponds to 440 to 726; sequence TPTAILVATG…QMGLRTIRQN (287 aa). D476 (4-aspartylphosphate intermediate) is an active-site residue. Mg(2+)-binding residues include D669 and D673. The helical transmembrane segment at 727–749 threads the bilayer; it reads LTWALGYNVVMLPLAAGAFLPAY. The Extracellular portion of the chain corresponds to 750–753; it reads GLAL. A helical membrane pass occupies residues 754 to 776; it reads TPAIAGACMAVSSLAVVSNSLLL. Residues 777–790 are Cytoplasmic-facing; it reads RYWFRRSLNHSVSV.

This sequence belongs to the cation transport ATPase (P-type) (TC 3.A.3) family. Type IB subfamily.

It localises to the cell membrane. It carries out the reaction Cu(2+)(in) + ATP + H2O = Cu(2+)(out) + ADP + phosphate + H(+). Functionally, involved in copper transport. In Synechococcus sp. (strain ATCC 27144 / PCC 6301 / SAUG 1402/1) (Anacystis nidulans), this protein is Probable copper-transporting ATPase SynA (synA).